Here is a 469-residue protein sequence, read N- to C-terminus: ATP-dependent protease ATPase subunit HslU (469 aa).

ATP contacts are provided by residues I24, 66–71 (GVGKTE), D282, E347, and R419.

This sequence belongs to the ClpX chaperone family. HslU subfamily. As to quaternary structure, a double ring-shaped homohexamer of HslV is capped on each side by a ring-shaped HslU homohexamer. The assembly of the HslU/HslV complex is dependent on binding of ATP.

It is found in the cytoplasm. ATPase subunit of a proteasome-like degradation complex; this subunit has chaperone activity. The binding of ATP and its subsequent hydrolysis by HslU are essential for unfolding of protein substrates subsequently hydrolyzed by HslV. HslU recognizes the N-terminal part of its protein substrates and unfolds these before they are guided to HslV for hydrolysis. The chain is ATP-dependent protease ATPase subunit HslU from Listeria monocytogenes serotype 4b (strain CLIP80459).